Here is a 379-residue protein sequence, read N- to C-terminus: Cyclin-dependent kinase-like 4 (379 aa).

The Protein kinase domain occupies 4–286 (YEKLAKTGEG…CSQLLESSYF (283 aa)). ATP contacts are provided by residues 10–18 (TGEGSYGVV) and K33. The [NKR]KIAxRE signature appears at 45-51 (KKIALRE). D126 (proton acceptor) is an active-site residue.

This sequence belongs to the protein kinase superfamily. CMGC Ser/Thr protein kinase family. CDC2/CDKX subfamily.

The protein localises to the cytoplasm. It carries out the reaction L-seryl-[protein] + ATP = O-phospho-L-seryl-[protein] + ADP + H(+). The catalysed reaction is L-threonyl-[protein] + ATP = O-phospho-L-threonyl-[protein] + ADP + H(+). The polypeptide is Cyclin-dependent kinase-like 4 (CDKL4) (Homo sapiens (Human)).